Consider the following 515-residue polypeptide: Pescadillo homolog (515 aa).

The stretch at 270–327 (EVLAALNHTLKIIQTQEEDLEVDEFPIDPNSEDAEAIQAQKEEETKLERLKNLFSECK) forms a coiled coil. Residues 318 to 411 (RLKNLFSECK…KLLPVEEYFP (94 aa)) enclose the BRCT domain. A disordered region spans residues 477 to 515 (RLYEKIMHSKKKKRSEVRKLESKRKVHDEEKAKKKLKSS). A compositionally biased stretch (basic residues) spans 484-501 (HSKKKKRSEVRKLESKRK).

It belongs to the pescadillo family.

It localises to the nucleus. The protein localises to the nucleolus. Its subcellular location is the nucleoplasm. Its function is as follows. Required for maturation of ribosomal RNAs and formation of the large ribosomal subunit. This chain is Pescadillo homolog, found in Nematostella vectensis (Starlet sea anemone).